A 511-amino-acid polypeptide reads, in one-letter code: ATP synthase subunit beta, mitochondrial (511 aa).

The N-terminal 33 residues, 1–33 (MVLPRLYTATSRAAFKAAKQSAPLLSTSWKRCM), are a transit peptide targeting the mitochondrion. A Phosphothreonine modification is found at Thr-112. 190–197 (GGAGVGKT) is an ATP binding site. Residue Thr-237 is modified to Phosphothreonine. Ser-373 carries the phosphoserine modification.

It belongs to the ATPase alpha/beta chains family. As to quaternary structure, F-type ATPases have 2 components, CF(1) - the catalytic core - and CF(0) - the membrane proton channel. CF(1) has five subunits: alpha(3), beta(3), gamma(1), delta(1), epsilon(1). CF(0) has three main subunits: a, b and c.

The protein resides in the mitochondrion. Its subcellular location is the mitochondrion inner membrane. It carries out the reaction ATP + H2O + 4 H(+)(in) = ADP + phosphate + 5 H(+)(out). In terms of biological role, mitochondrial membrane ATP synthase (F(1)F(0) ATP synthase or Complex V) produces ATP from ADP in the presence of a proton gradient across the membrane which is generated by electron transport complexes of the respiratory chain. F-type ATPases consist of two structural domains, F(1) - containing the extramembraneous catalytic core, and F(0) - containing the membrane proton channel, linked together by a central stalk and a peripheral stalk. During catalysis, ATP synthesis in the catalytic domain of F(1) is coupled via a rotary mechanism of the central stalk subunits to proton translocation. Subunits alpha and beta form the catalytic core in F(1). Rotation of the central stalk against the surrounding alpha(3)beta(3) subunits leads to hydrolysis of ATP in three separate catalytic sites on the beta subunits. The chain is ATP synthase subunit beta, mitochondrial (ATP2) from Saccharomyces cerevisiae (strain ATCC 204508 / S288c) (Baker's yeast).